The chain runs to 459 residues: Vasoactive intestinal polypeptide receptor 1 (459 aa).

The N-terminal stretch at 1–30 is a signal peptide; that stretch reads MRPPSPPHVRWLCVLAGALACALRPAGSQA. Residues 31 to 142 are Extracellular-facing; the sequence is ASPQHECEYL…EQQQTKFYNT (112 aa). Disulfide bonds link C37–C209, C50–C72, C63–C105, C86–C122, and C216–C286. Residues N58, N69, and N100 are each glycosylated (N-linked (GlcNAc...) asparagine). A helical transmembrane segment spans residues 143-167; that stretch reads VKTGYTIGYSLSLASLLVAMAILSL. The Cytoplasmic segment spans residues 168-175; sequence FRKLHCTR. A helical transmembrane segment spans residues 176-197; that stretch reads NYIHMHLFMSFILRATAVFIKD. The Extracellular segment spans residues 198–217; that stretch reads MALFNSGEIDHCSEASVGCK. Residues 218–242 form a helical membrane-spanning segment; that stretch reads AAVVFFQYCVMANFFWLLVEGLYLY. At 243–255 the chain is on the cytoplasmic side; sequence TLLAVSFFSERKY. Residues 256 to 277 form a helical membrane-spanning segment; that stretch reads FWGYILIGWGVPSVFITIWTVV. Residues 278 to 293 are Extracellular-facing; it reads RIYFEDFGCWDTIINS. N-linked (GlcNAc...) asparagine glycosylation is present at N292. A helical membrane pass occupies residues 294–318; it reads SLWWIIKAPILLSILVNFVLFICII. Residues 319–340 lie on the Cytoplasmic side of the membrane; sequence RILVQKLRPPDIGKNDSSPYSR. Residues 341-361 traverse the membrane as a helical segment; it reads LAKSTLLLIPLFGIHYVMFAF. At 362-369 the chain is on the extracellular side; the sequence is FPDNFKAQ. Residues 370–393 traverse the membrane as a helical segment; it reads VKMVFELVVGSFQGFVVAILYCFL. At 394–459 the chain is on the cytoplasmic side; sequence NGEVQAELRR…SSFQAEVSLV (66 aa).

Belongs to the G-protein coupled receptor 2 family. In terms of assembly, interacts with ADCYAP1/PACAP; activated by both PACAP27 and PACAP38 neuropeptides. Interacts with VIP; the interaction results in VIPR1 activation. As to expression, in liver, lung, intestines, thymus and brain (mostly in the cerebral cortex and hippocampus).

It is found in the cell membrane. Its function is as follows. G protein-coupled receptor activated by the neuropeptides vasoactive intestinal peptide (VIP) and pituitary adenylate cyclase-activating polypeptide (ADCYAP1/PACAP). Binds VIP and both PACAP27 and PACAP38 bioactive peptides with the following order of ligand affinity VIP = PACAP27 &gt; PACAP38. Ligand binding causes a conformation change that triggers signaling via guanine nucleotide-binding proteins (G proteins) and modulates the activity of downstream effectors. Activates cAMP-dependent pathway. In Rattus norvegicus (Rat), this protein is Vasoactive intestinal polypeptide receptor 1.